Reading from the N-terminus, the 780-residue chain is MAAVDLEKLRASGAGKAIGVLTSGGDAQGMNAAVRAVTRMGIYVGAKVFLIYEGYEGLVEGGENIKQANWLSVSNIIQLGGTIIGSARCKAFTTREGRRAAAYNLVQHGITNLCVIGGDGSLTGANIFRSEWGSLLEELVAEGKISETTARTYSHLNIAGLVGSIDNDFCGTDMTIGTDSALHRIMEVIDAITTTAQSHQRTFVLEVMGRHCGYLALVSALASGADWLFIPEAPPEDGWENFMCERLGETRSRGSRLNIIIIAEGAIDRNGKPISSSYVKDLVVQRLGFDTRVTVLGHVQRGGTPSAFDRILSSKMGMEAVMALLEATPDTPACVVTLSGNQSVRLPLMECVQMTKEVQKAMDDKRFDEATQLRGGSFENNWNIYKLLAHQKPPKEKSNFSLAILNVGAPAAGMNAAVRSAVRTGISHGHTVYVVHDGFEGLAKGQVQEVGWHDVAGWLGRGGSMLGTKRTLPKGQLESIVENIRIYGIHALLVVGGFEAYEGVLQLVEARGRYEELCIVMCVIPATISNNVPGTDFSLGSDTAVNAAMESCDRIKQSASGTKRRVFIVETMGGYCGYLATVTGIAVGADAAYVFEDPFNIHDLKVNVEHMTEKMKTDIQRGLVLRNEKCHDYYTTEFLYNLYSSEGKGVFDCRTNVLGHLQQGGAPTPFDRNYGTKLGVKAMLWLSEKLREVYRKGRVFANAPDSACVIGLKKKAVAFSPVTELKKDTDFEHRMPREQWWLSLRLMLKMLAQYRISMAAYVSGELEHVTRRTLSMDKGF.

An N-acetylalanine modification is found at A2. Positions 2 to 390 (AAVDLEKLRA…NWNIYKLLAH (389 aa)) are N-terminal catalytic PFK domain 1. ATP-binding positions include G25, 88 to 89 (RC), and 118 to 121 (GDGS). Residue D119 coordinates Mg(2+). Substrate contacts are provided by residues 164-166 (SID), R201, 208-210 (MGR), E264, R292, and 298-301 (HVQR). D166 acts as the Proton acceptor in catalysis. Residue S377 is modified to Phosphoserine. The interdomain linker stretch occupies residues 391–400 (QKPPKEKSNF). The tract at residues 401 to 780 (SLAILNVGAP…RRTLSMDKGF (380 aa)) is C-terminal regulatory PFK domain 2. Beta-D-fructose 2,6-bisphosphate contacts are provided by residues R470, 527–531 (TISNN), R565, 572–574 (MGG), and E628. S529 carries an O-linked (GlcNAc) serine glycan. Y640 carries the phosphotyrosine modification. Beta-D-fructose 2,6-bisphosphate-binding positions include R654, 660-663 (HLQQ), and R734. Phosphoserine is present on S775.

Belongs to the phosphofructokinase type A (PFKA) family. ATP-dependent PFK group I subfamily. Eukaryotic two domain clade 'E' sub-subfamily. Homo- and heterotetramers. Phosphofructokinase (PFK) enzyme functions as a tetramer composed of different combinations of 3 types of subunits, called PFKM (where M stands for Muscle), PFKL (Liver) and PFKP (Platelet). The composition of the PFK tetramer differs according to the tissue type it is present in. In muscles, it is composed of 4 PFKM subunits (also called M4). In the liver, the predominant form is a tetramer of PFKL subunits (L4). In erythrocytes, both PFKM and PFKL subunits randomly tetramerize to form M4, L4 and other combinations (ML3, M2L2, M3L). The kinetic and regulatory properties of the tetrameric enzyme are dependent on the subunit composition, hence can vary across tissues. Mg(2+) serves as cofactor. GlcNAcylation at Ser-529 by OGT decreases enzyme activity, leading to redirect glucose flux through the oxidative pentose phosphate pathway. Glycosylation is stimulated by both hypoxia and glucose deprivation.

It is found in the cytoplasm. It catalyses the reaction beta-D-fructose 6-phosphate + ATP = beta-D-fructose 1,6-bisphosphate + ADP + H(+). The protein operates within carbohydrate degradation; glycolysis; D-glyceraldehyde 3-phosphate and glycerone phosphate from D-glucose: step 3/4. Allosterically activated by ADP, AMP, or fructose 2,6-bisphosphate, and allosterically inhibited by ATP or citrate. GlcNAcylation by OGT overcomes allosteric regulation. Its function is as follows. Catalyzes the phosphorylation of D-fructose 6-phosphate to fructose 1,6-bisphosphate by ATP, the first committing step of glycolysis. Negatively regulates the phagocyte oxidative burst in response to bacterial infection by controlling cellular NADPH biosynthesis and NADPH oxidase-derived reactive oxygen species. Upon macrophage activation, drives the metabolic switch toward glycolysis, thus preventing glucose turnover that produces NADPH via pentose phosphate pathway. This Homo sapiens (Human) protein is ATP-dependent 6-phosphofructokinase, liver type.